The following is a 1011-amino-acid chain: Vacuolar membrane protease (1011 aa).

The Cytoplasmic segment spans residues 1–9; the sequence is MSNPFAFRS. Residues 10 to 30 form a helical membrane-spanning segment; the sequence is AQVTFWTTVVYLALLVPLVVI. The Vacuolar portion of the chain corresponds to 31-378; it reads NEGVPPVQPD…TFVLFGLRGM (348 aa). N-linked (GlcNAc...) asparagine glycosylation is found at asparagine 50 and asparagine 106. Histidine 159 and aspartate 171 together coordinate Zn(2+). Glutamate 205 serves as the catalytic Proton acceptor. Residues glutamate 206, glutamate 231, and histidine 304 each contribute to the Zn(2+) site. Residue asparagine 331 is glycosylated (N-linked (GlcNAc...) asparagine). The chain crosses the membrane as a helical span at residues 379–399; that stretch reads FAWSLTVLIVGPLTLFGMMYL. The Cytoplasmic portion of the chain corresponds to 400–439; it reads VHKQGKGYAFHTKLRATSDSSSEDGDDEDGEVIRLGGWKG. The helical transmembrane segment at 440–460 threads the bilayer; sequence FFRFPFALIVAGALVTGAALL. At 461-471 the chain is on the vacuolar side; sequence LRKMNPFIIYS. Residues 472–492 traverse the membrane as a helical segment; that stretch reads SEYAVWAMMISLFYFGFWLIM. Residues 493-505 are Cytoplasmic-facing; that stretch reads RGSSYTRPSALHR. A helical transmembrane segment spans residues 506–526; it reads LYVHIWLFILGWVALVFATVL. At 527–536 the chain is on the vacuolar side; the sequence is EDRMRIASGY. A helical membrane pass occupies residues 537-557; it reads IFVFWESQVFLATLVAVCELF. Over 558–682 the chain is Cytoplasmic; sequence SLPRKIDFAR…WSGPMVTSTW (125 aa). Over residues 595 to 609 the composition is skewed to polar residues; it reads EATSPQRAGQSSNSP. Disordered stretches follow at residues 595-627 and 650-671; these read EATS…LFRK and IMDS…EGEQ. The segment covering 610–622 has biased composition (acidic residues); the sequence is QEDDEDDVPDEET. Residues 683 to 703 form a helical membrane-spanning segment; the sequence is ILQFLLLGPFMVILGGQVGLL. Residues 704-719 are Vacuolar-facing; that stretch reads LTSAVNQTGVDGSSLL. Asparagine 709 carries N-linked (GlcNAc...) asparagine glycosylation. Residues 720–740 form a helical membrane-spanning segment; that stretch reads APYLMIAALSAILLMPLSPFI. Residues 741–747 lie on the Cytoplasmic side of the membrane; it reads HRVTKHV. Residues 748-768 traverse the membrane as a helical segment; the sequence is PLFLLAVAFATLIYSLVAFPF. The Vacuolar segment spans residues 769–1011; the sequence is SPRAPYKTFF…LVEGSKAFKV (243 aa). Asparagine 872 is a glycosylation site (N-linked (GlcNAc...) asparagine).

It belongs to the peptidase M28 family. Requires Zn(2+) as cofactor.

The protein localises to the vacuole membrane. May be involved in vacuolar sorting and osmoregulation. This chain is Vacuolar membrane protease, found in Pyricularia oryzae (strain 70-15 / ATCC MYA-4617 / FGSC 8958) (Rice blast fungus).